An 89-amino-acid polypeptide reads, in one-letter code: Small ribosomal subunit protein uS14A (89 aa).

The disordered stretch occupies residues 29 to 62; it reads AAGDRTALAKLPRDSNPNRLRLRDQTDGRPRGYM. A compositionally biased stretch (basic and acidic residues) spans 49-58; it reads RLRDQTDGRP.

The protein belongs to the universal ribosomal protein uS14 family. In terms of assembly, part of the 30S ribosomal subunit. Contacts proteins S3 and S10.

Its function is as follows. Binds 16S rRNA, required for the assembly of 30S particles and may also be responsible for determining the conformation of the 16S rRNA at the A site. The protein is Small ribosomal subunit protein uS14A of Enterococcus faecalis (strain ATCC 700802 / V583).